Reading from the N-terminus, the 364-residue chain is Beta-parvin (364 aa).

Positions 1 to 57 (MSSAPRSPTPRPRRMKKDESFLGKLGGTLARKRRAREVSDLQEEGKNAINSPMSPAL) are disordered. Position 7 is a phosphoserine (serine 7). Residues 36 to 46 (REVSDLQEEGK) are compositionally biased toward basic and acidic residues. Serine 54 carries the post-translational modification Phosphoserine. Calponin-homology (CH) domains are found at residues 87–194 (KELV…MHFR) and 254–361 (SVVK…TKYK).

It belongs to the parvin family. Interacts with DYSF. Interacts with ILK, ARHGEF6, PXN (via LD motifs), ACTN2 and actin. Expressed predominantly in heart and skeletal muscle.

It localises to the cell junction. It is found in the focal adhesion. Its subcellular location is the cell membrane. The protein localises to the cytoplasm. The protein resides in the cytoskeleton. It localises to the cell projection. It is found in the lamellipodium. Its subcellular location is the myofibril. The protein localises to the sarcomere. The protein resides in the z line. Its function is as follows. Adapter protein that plays a role in integrin signaling via ILK and in activation of the GTPases CDC42 and RAC1 by guanine exchange factors, such as ARHGEF6. Is involved in the reorganization of the actin cytoskeleton and formation of lamellipodia. Plays a role in cell adhesion, cell spreading, establishment or maintenance of cell polarity, and cell migration. This chain is Beta-parvin (PARVB), found in Homo sapiens (Human).